We begin with the raw amino-acid sequence, 351 residues long: DNA polymerase IV (351 aa).

The 182-residue stretch at 4-185 folds into the UmuC domain; that stretch reads IIHVDMDCFF…LPLAKIPGVG (182 aa). Mg(2+)-binding residues include Asp-8 and Asp-103. Residue Glu-104 is part of the active site.

This sequence belongs to the DNA polymerase type-Y family. As to quaternary structure, monomer. The cofactor is Mg(2+).

Its subcellular location is the cytoplasm. It carries out the reaction DNA(n) + a 2'-deoxyribonucleoside 5'-triphosphate = DNA(n+1) + diphosphate. In terms of biological role, poorly processive, error-prone DNA polymerase involved in untargeted mutagenesis. Copies undamaged DNA at stalled replication forks, which arise in vivo from mismatched or misaligned primer ends. These misaligned primers can be extended by PolIV. Exhibits no 3'-5' exonuclease (proofreading) activity. May be involved in translesional synthesis, in conjunction with the beta clamp from PolIII. The protein is DNA polymerase IV of Salmonella arizonae (strain ATCC BAA-731 / CDC346-86 / RSK2980).